A 292-amino-acid polypeptide reads, in one-letter code: Bifunctional protein FolD (292 aa).

NADP(+) contacts are provided by residues 171-173 (GAS), isoleucine 196, and isoleucine 237.

The protein belongs to the tetrahydrofolate dehydrogenase/cyclohydrolase family. Homodimer.

It catalyses the reaction (6R)-5,10-methylene-5,6,7,8-tetrahydrofolate + NADP(+) = (6R)-5,10-methenyltetrahydrofolate + NADPH. The catalysed reaction is (6R)-5,10-methenyltetrahydrofolate + H2O = (6R)-10-formyltetrahydrofolate + H(+). Its pathway is one-carbon metabolism; tetrahydrofolate interconversion. Catalyzes the oxidation of 5,10-methylenetetrahydrofolate to 5,10-methenyltetrahydrofolate and then the hydrolysis of 5,10-methenyltetrahydrofolate to 10-formyltetrahydrofolate. In Helicobacter acinonychis (strain Sheeba), this protein is Bifunctional protein FolD.